The following is a 321-amino-acid chain: ATP-dependent 6-phosphofructokinase (321 aa).

Gly-11 is an ATP binding site. Position 21–25 (21–25 (RAVVR)) interacts with ADP. ATP is bound by residues 72-73 (RC) and 102-105 (GDGS). Asp-103 serves as a coordination point for Mg(2+). Position 126 to 128 (126 to 128 (TID)) interacts with substrate. Asp-128 functions as the Proton acceptor in the catalytic mechanism. Arg-155 provides a ligand contact to ADP. Substrate-binding positions include Arg-163 and 170-172 (MGR). Residues 186-188 (GAE), Arg-212, and 214-216 (KLH) contribute to the ADP site. Residues Glu-223, Arg-245, and 251–254 (HIQR) each bind substrate.

This sequence belongs to the phosphofructokinase type A (PFKA) family. ATP-dependent PFK group I subfamily. Prokaryotic clade 'B1' sub-subfamily. Homotetramer. It depends on Mg(2+) as a cofactor.

The protein localises to the cytoplasm. It catalyses the reaction beta-D-fructose 6-phosphate + ATP = beta-D-fructose 1,6-bisphosphate + ADP + H(+). It participates in carbohydrate degradation; glycolysis; D-glyceraldehyde 3-phosphate and glycerone phosphate from D-glucose: step 3/4. With respect to regulation, allosterically activated by ADP and other diphosphonucleosides, and allosterically inhibited by phosphoenolpyruvate. In terms of biological role, catalyzes the phosphorylation of D-fructose 6-phosphate to fructose 1,6-bisphosphate by ATP, the first committing step of glycolysis. The chain is ATP-dependent 6-phosphofructokinase from Thermoanaerobacter pseudethanolicus (strain ATCC 33223 / 39E) (Clostridium thermohydrosulfuricum).